The sequence spans 338 residues: tRNA N6-adenosine threonylcarbamoyltransferase (338 aa).

Residues His114 and His118 each contribute to the Fe cation site. Substrate is bound by residues 137–141 (IVSGG), Asp170, Gly183, Asp187, and Asn277. Asp305 is a Fe cation binding site.

It belongs to the KAE1 / TsaD family. Fe(2+) serves as cofactor.

It is found in the cytoplasm. It carries out the reaction L-threonylcarbamoyladenylate + adenosine(37) in tRNA = N(6)-L-threonylcarbamoyladenosine(37) in tRNA + AMP + H(+). Its function is as follows. Required for the formation of a threonylcarbamoyl group on adenosine at position 37 (t(6)A37) in tRNAs that read codons beginning with adenine. Is involved in the transfer of the threonylcarbamoyl moiety of threonylcarbamoyl-AMP (TC-AMP) to the N6 group of A37, together with TsaE and TsaB. TsaD likely plays a direct catalytic role in this reaction. This Clostridioides difficile (strain 630) (Peptoclostridium difficile) protein is tRNA N6-adenosine threonylcarbamoyltransferase.